A 327-amino-acid polypeptide reads, in one-letter code: Glycerol-3-phosphate dehydrogenase [NAD(P)+] (327 aa).

Trp-16, Arg-36, and Lys-108 together coordinate NADPH. Residues Lys-108, Gly-136, and Ser-138 each coordinate sn-glycerol 3-phosphate. Position 140 (Ala-140) interacts with NADPH. Residues Lys-191, Asp-244, Ser-254, Arg-255, and Asn-256 each coordinate sn-glycerol 3-phosphate. Lys-191 serves as the catalytic Proton acceptor. Arg-255 serves as a coordination point for NADPH. 2 residues coordinate NADPH: Leu-274 and Glu-276.

The protein belongs to the NAD-dependent glycerol-3-phosphate dehydrogenase family.

The protein localises to the cytoplasm. The catalysed reaction is sn-glycerol 3-phosphate + NAD(+) = dihydroxyacetone phosphate + NADH + H(+). It catalyses the reaction sn-glycerol 3-phosphate + NADP(+) = dihydroxyacetone phosphate + NADPH + H(+). It participates in membrane lipid metabolism; glycerophospholipid metabolism. Catalyzes the reduction of the glycolytic intermediate dihydroxyacetone phosphate (DHAP) to sn-glycerol 3-phosphate (G3P), the key precursor for phospholipid synthesis. The protein is Glycerol-3-phosphate dehydrogenase [NAD(P)+] of Bradyrhizobium sp. (strain ORS 278).